The sequence spans 886 residues: MTTLSPEAFAGHTPMMQQYLRIKADHPDTLVFYRMGDFYELFFEDAEKAARLLDLTLTQRGASAGTPIKMAGVPHHAVEQYLAKLVKMGESVAICEQIGDPATSKGPVERKVVRVVTPGTLTDAALLSDKNDVYLLAMCTGHNKRGVAVNIGLAWLNLASGALRLAEIEPDQLGTALERIRPAEILTADGATDAVPAGAGAIKRVPAWHFDIASGTQRLCDQLDVAGLDGFGAHSLTSACGAAGALLLYAAATQGQQLRHVRSLKVENETEYIGLDPATRRNLELTETLRGTESPTLYSLLDTCCTTMGSRLLRHWLHHPPRASVAAQSRQQAIGALLDAPADASLDALRSALRQIADVERITGRLALLSARPRDLSSLRDTFAALPALRERISAIVANADALTRVDAALAPPAECLDLLTSAIAPEPAAMVRDGGVIARGYDAELDELRDISENCGQFLIDLEARERTRTGIANLRVEYNKVHGFYIEVTRGQTDKVPDDYRRRQTLKNAERYITPELKTFEDKALSAQERALARERALYDGVLQALLPFIPECQRVASALAELDVLAAFAERARTLDWVAPTFTDEIGIEIEQGRHPVVEAQVEQFIANDCRFGAERKLLLITGPNMGGKSTFMRQTALIALMAYVGSYVPAKSACFGPIDRIFTRIGAADDLAGGRSTFMVEMTEAAAILNDATPQSLVLMDEIGRGTSTFDGLALAWAIARHLLAQNGCYTLFATHYFELTQLPAEFPQAANVHLSAVEHGHGIVFLHAVNEGPANQSYGLQVAQLAGVPAPVIRAARKHLAYLEQQSATQNTPQLDLFSAPPAAAADELECADAPAVSALPHPALEKLRDIDPDDLKPRDALDLLYELRTLVRSHDADGHA.

626 to 633 (GPNMGGKS) lines the ATP pocket.

The protein belongs to the DNA mismatch repair MutS family.

This protein is involved in the repair of mismatches in DNA. It is possible that it carries out the mismatch recognition step. This protein has a weak ATPase activity. The protein is DNA mismatch repair protein MutS of Burkholderia ambifaria (strain ATCC BAA-244 / DSM 16087 / CCUG 44356 / LMG 19182 / AMMD) (Burkholderia cepacia (strain AMMD)).